A 182-amino-acid polypeptide reads, in one-letter code: Probable RNA 2'-phosphotransferase (182 aa).

This sequence belongs to the KptA/TPT1 family.

Removes the 2'-phosphate from RNA via an intermediate in which the phosphate is ADP-ribosylated by NAD followed by a presumed transesterification to release the RNA and generate ADP-ribose 1''-2''-cyclic phosphate (APPR&gt;P). May function as an ADP-ribosylase. The polypeptide is Probable RNA 2'-phosphotransferase (Pseudomonas paraeruginosa (strain DSM 24068 / PA7) (Pseudomonas aeruginosa (strain PA7))).